Consider the following 410-residue polypeptide: LL-diaminopimelate aminotransferase (410 aa).

Positions 15 and 42 each coordinate substrate. Pyridoxal 5'-phosphate is bound by residues Y72, 108–109 (AK), Y132, N188, Y219, and 247–249 (SFS). K109, Y132, and N188 together coordinate substrate. K250 carries the N6-(pyridoxal phosphate)lysine modification. R258 and N293 together coordinate pyridoxal 5'-phosphate. Residues N293 and R389 each coordinate substrate.

It belongs to the class-I pyridoxal-phosphate-dependent aminotransferase family. LL-diaminopimelate aminotransferase subfamily. Homodimer. Pyridoxal 5'-phosphate serves as cofactor.

The enzyme catalyses (2S,6S)-2,6-diaminopimelate + 2-oxoglutarate = (S)-2,3,4,5-tetrahydrodipicolinate + L-glutamate + H2O + H(+). The protein operates within amino-acid biosynthesis; L-lysine biosynthesis via DAP pathway; LL-2,6-diaminopimelate from (S)-tetrahydrodipicolinate (aminotransferase route): step 1/1. Its function is as follows. Involved in the synthesis of meso-diaminopimelate (m-DAP or DL-DAP), required for both lysine and peptidoglycan biosynthesis. Catalyzes the direct conversion of tetrahydrodipicolinate to LL-diaminopimelate. The polypeptide is LL-diaminopimelate aminotransferase (Bacteroides fragilis (strain YCH46)).